We begin with the raw amino-acid sequence, 328 residues long: Ketol-acid reductoisomerase (NADP(+)) (328 aa).

The 181-residue stretch at 2–182 folds into the KARI N-terminal Rossmann domain; that stretch reads AKIYTDREAS…GATRAGVIET (181 aa). NADP(+)-binding positions include 25–28, Arg48, Ser53, and 83–86; these read YGIQ and DMEQ. His108 is an active-site residue. Residue Gly134 participates in NADP(+) binding. Positions 183-328 constitute a KARI C-terminal knotted domain; sequence TFAEETETDL…EEMRKLLFGP (146 aa). The Mg(2+) site is built by Asp191, Glu195, Glu227, and Glu231. Residue Ser252 participates in substrate binding.

Belongs to the ketol-acid reductoisomerase family. Mg(2+) is required as a cofactor.

The catalysed reaction is (2R)-2,3-dihydroxy-3-methylbutanoate + NADP(+) = (2S)-2-acetolactate + NADPH + H(+). It carries out the reaction (2R,3R)-2,3-dihydroxy-3-methylpentanoate + NADP(+) = (S)-2-ethyl-2-hydroxy-3-oxobutanoate + NADPH + H(+). It functions in the pathway amino-acid biosynthesis; L-isoleucine biosynthesis; L-isoleucine from 2-oxobutanoate: step 2/4. The protein operates within amino-acid biosynthesis; L-valine biosynthesis; L-valine from pyruvate: step 2/4. Its function is as follows. Involved in the biosynthesis of branched-chain amino acids (BCAA). Catalyzes an alkyl-migration followed by a ketol-acid reduction of (S)-2-acetolactate (S2AL) to yield (R)-2,3-dihydroxy-isovalerate. In the isomerase reaction, S2AL is rearranged via a Mg-dependent methyl migration to produce 3-hydroxy-3-methyl-2-ketobutyrate (HMKB). In the reductase reaction, this 2-ketoacid undergoes a metal-dependent reduction by NADPH to yield (R)-2,3-dihydroxy-isovalerate. The polypeptide is Ketol-acid reductoisomerase (NADP(+)) (Pyrobaculum aerophilum (strain ATCC 51768 / DSM 7523 / JCM 9630 / CIP 104966 / NBRC 100827 / IM2)).